A 245-amino-acid chain; its full sequence is 1-(5-phosphoribosyl)-5-[(5-phosphoribosylamino)methylideneamino] imidazole-4-carboxamide isomerase (245 aa).

Asp-7 (proton acceptor) is an active-site residue. Residue Asp-129 is the Proton donor of the active site.

This sequence belongs to the HisA/HisF family.

The protein resides in the cytoplasm. The catalysed reaction is 1-(5-phospho-beta-D-ribosyl)-5-[(5-phospho-beta-D-ribosylamino)methylideneamino]imidazole-4-carboxamide = 5-[(5-phospho-1-deoxy-D-ribulos-1-ylimino)methylamino]-1-(5-phospho-beta-D-ribosyl)imidazole-4-carboxamide. It functions in the pathway amino-acid biosynthesis; L-histidine biosynthesis; L-histidine from 5-phospho-alpha-D-ribose 1-diphosphate: step 4/9. The polypeptide is 1-(5-phosphoribosyl)-5-[(5-phosphoribosylamino)methylideneamino] imidazole-4-carboxamide isomerase (Escherichia coli (strain ATCC 8739 / DSM 1576 / NBRC 3972 / NCIMB 8545 / WDCM 00012 / Crooks)).